Consider the following 161-residue polypeptide: Type-1 angiotensin II receptor-associated protein (161 aa).

Residues 1-26 (MELPAVNLKVILLVHWLLTTWGCLVF) are Extracellular-facing. Residues 27–47 (SSSYAWGNFTILALGVWAVAQ) form a helical membrane-spanning segment. Topologically, residues 48 to 53 (RDSIDA) are cytoplasmic. Residues 54 to 74 (IGMFLGGLVATIFLDIIYISI) traverse the membrane as a helical segment. Residues 75–86 (FYSSVATGDTGR) lie on the Extracellular side of the membrane. The helical transmembrane segment at 87-107 (FGAGMAILSLLLKPFSCCLVY) threads the bilayer. Topologically, residues 108–161 (HMHRERGGELPLRPDFFGPSQEHSAYQTIDSSSDAAADPFASLENKGQAVPRGY) are cytoplasmic. The interval 110-122 (HRERGGELPLRPD) is interaction with AGTR1. The residue at position 127 (S127) is a Phosphoserine. Residue T135 is modified to Phosphothreonine. S138 is modified (phosphoserine).

In terms of assembly, interacts with RACK1, and with the C-terminal region of AGTR1. As to expression, ubiquitous but more abundant in kidney, testis and heart.

Its subcellular location is the endoplasmic reticulum membrane. It localises to the golgi apparatus membrane. The protein resides in the cytoplasmic vesicle membrane. Functionally, appears to be a negative regulator of type-1 angiotensin II receptor-mediated signaling by regulating receptor internalization as well as mechanism of receptor desensitization such as phosphorylation. Also induces a decrease in angiotensin II-stimulated transcriptional activity. May play a role of negative regulator in cardiomyocyte hypertrophy induced by angiotensin II through an inhibition of p38 mitogen-activated protein kinase pathway. The polypeptide is Type-1 angiotensin II receptor-associated protein (Agtrap) (Mus musculus (Mouse)).